A 198-amino-acid polypeptide reads, in one-letter code: Dephospho-CoA kinase (198 aa).

One can recognise a DPCK domain in the interval 4-198; that stretch reads IIGITGGIAS…DSQLRRLQNE (195 aa). 12–17 is an ATP binding site; that stretch reads ASGKST.

It belongs to the CoaE family.

Its subcellular location is the cytoplasm. It carries out the reaction 3'-dephospho-CoA + ATP = ADP + CoA + H(+). It participates in cofactor biosynthesis; coenzyme A biosynthesis; CoA from (R)-pantothenate: step 5/5. In terms of biological role, catalyzes the phosphorylation of the 3'-hydroxyl group of dephosphocoenzyme A to form coenzyme A. This Streptococcus mutans serotype c (strain ATCC 700610 / UA159) protein is Dephospho-CoA kinase.